We begin with the raw amino-acid sequence, 122 residues long: Lysozyme (122 aa).

Residues 3 to 118 enclose the I-type lysozyme domain; the sequence is GGIVSQRCLS…WNRLQKISGC (116 aa). Disulfide bonds link C10–C86, C13–C118, C15–C21, C26–C35, C48–C68, C58–C64, and C82–C100. E18 serves as the catalytic Proton donor. Catalysis depends on D29, which acts as the Nucleophile. 41–47 contributes to the substrate binding site; the sequence is KEAYWID. Substrate contacts are provided by residues Y72, H93, 93-95, and K102; that span reads HNG.

Belongs to the glycosyl hydrolase 22 family. Type-I lysozyme subfamily. Monomer.

The protein resides in the secreted. It carries out the reaction Hydrolysis of (1-&gt;4)-beta-linkages between N-acetylmuramic acid and N-acetyl-D-glucosamine residues in a peptidoglycan and between N-acetyl-D-glucosamine residues in chitodextrins.. In terms of biological role, has bacteriolytic activity against Gram-positive bacteria M.luteus. Also has chitinase activity. This chain is Lysozyme, found in Meretrix lusoria (Hard clam).